The following is a 185-amino-acid chain: Keratin-associated protein 4-8 (185 aa).

Repeat copies occupy residues 14-18 (GCGQD), 19-23 (LCQET), 24-28 (CCCPS), 39-43 (CYRPS), 44-48 (YSVSC), 49-53 (CCRPQ), 54-58 (CCQSV), 59-63 (CCQPT), 64-68 (CCRPS), 69-73 (CCVSS), 74-78 (CCKPQ), 79-83 (CCQSV), 84-88 (CCQPT), 89-93 (CCHPS), 94-98 (CCISS), 99-103 (CCRPS), 104-108 (CCVSS), 109-113 (CCKPQ), 114-118 (CCQSV), 119-123 (CCQPN), 124-128 (CCRPS), 134-138 (CCRPS), 139-143 (CCESS), 144-148 (CCRPC), and 149-164 (CCLR…HTTC). The segment at 14–164 (GCGQDLCQET…CGRVSCHTTC (151 aa)) is 25 X 5 AA repeats of C-C-[IKRQVHEC]-[SPRT]-[STCVQPR].

Belongs to the KRTAP type 4 family. In terms of assembly, interacts with hair keratins. As to expression, expressed in the hair follicles.

Functionally, in the hair cortex, hair keratin intermediate filaments are embedded in an interfilamentous matrix, consisting of hair keratin-associated proteins (KRTAP), which are essential for the formation of a rigid and resistant hair shaft through their extensive disulfide bond cross-linking with abundant cysteine residues of hair keratins. The matrix proteins include the high-sulfur and high-glycine-tyrosine keratins. This is Keratin-associated protein 4-8 (KRTAP4-8) from Homo sapiens (Human).